An 88-amino-acid polypeptide reads, in one-letter code: U-scoloptoxin(12)-Sa1a (88 aa).

The N-terminal stretch at 1-20 (MKYMIITVVILFTCALKMFC) is a signal peptide.

This sequence belongs to the scoloptoxin-12 family. In terms of processing, contains 3 disulfide bonds. In terms of tissue distribution, expressed by the venom gland.

The protein resides in the secreted. This is U-scoloptoxin(12)-Sa1a from Scolopendra alternans (Florida Keys giant centipede).